A 238-amino-acid polypeptide reads, in one-letter code: MSASVSKVVVVFSGGQDSTTCLIQALTQYDEVHGITFDYGQRHREEIDVAKSLAQRLNITSHKVMDVSLLNELAISALTRDAIPVSHELMENGLPNTFVPGRNILFLTLAGIYAYQLGAEAIITGVCETDFSGYPDCRHDFVRAMESALVQGMDKKLNIITPLMWLNKAQTWALADKYQQLDLVRHHTLTCYNGIVGDGCGDCPACHLRQRGLDDYLQNKSAVMASLTQAIETGKPQA.

12 to 22 (FSGGQDSTTCL) provides a ligand contact to ATP. Residues Cys-191, Cys-200, Cys-203, and Cys-206 each coordinate Zn(2+).

It belongs to the QueC family. Zn(2+) is required as a cofactor.

It carries out the reaction 7-carboxy-7-deazaguanine + NH4(+) + ATP = 7-cyano-7-deazaguanine + ADP + phosphate + H2O + H(+). It participates in purine metabolism; 7-cyano-7-deazaguanine biosynthesis. Its function is as follows. Catalyzes the ATP-dependent conversion of 7-carboxy-7-deazaguanine (CDG) to 7-cyano-7-deazaguanine (preQ(0)). The chain is 7-cyano-7-deazaguanine synthase from Shewanella oneidensis (strain ATCC 700550 / JCM 31522 / CIP 106686 / LMG 19005 / NCIMB 14063 / MR-1).